A 549-amino-acid chain; its full sequence is Glucose-6-phosphate isomerase (549 aa).

Residue glutamate 353 is the Proton donor of the active site. Catalysis depends on residues histidine 384 and lysine 512.

Belongs to the GPI family.

The protein resides in the cytoplasm. The catalysed reaction is alpha-D-glucose 6-phosphate = beta-D-fructose 6-phosphate. The protein operates within carbohydrate biosynthesis; gluconeogenesis. It participates in carbohydrate degradation; glycolysis; D-glyceraldehyde 3-phosphate and glycerone phosphate from D-glucose: step 2/4. Functionally, catalyzes the reversible isomerization of glucose-6-phosphate to fructose-6-phosphate. The chain is Glucose-6-phosphate isomerase from Alteromonas mediterranea (strain DSM 17117 / CIP 110805 / LMG 28347 / Deep ecotype).